We begin with the raw amino-acid sequence, 257 residues long: 3-deoxy-manno-octulosonate cytidylyltransferase (257 aa).

It belongs to the KdsB family.

Its subcellular location is the cytoplasm. It catalyses the reaction 3-deoxy-alpha-D-manno-oct-2-ulosonate + CTP = CMP-3-deoxy-beta-D-manno-octulosonate + diphosphate. The protein operates within nucleotide-sugar biosynthesis; CMP-3-deoxy-D-manno-octulosonate biosynthesis; CMP-3-deoxy-D-manno-octulosonate from 3-deoxy-D-manno-octulosonate and CTP: step 1/1. It participates in bacterial outer membrane biogenesis; lipopolysaccharide biosynthesis. Functionally, activates KDO (a required 8-carbon sugar) for incorporation into bacterial lipopolysaccharide in Gram-negative bacteria. The sequence is that of 3-deoxy-manno-octulosonate cytidylyltransferase from Xylella fastidiosa (strain M12).